Reading from the N-terminus, the 325-residue chain is tRNA N6-adenosine threonylcarbamoyltransferase (325 aa).

Fe cation is bound by residues His111 and His115. Substrate-binding positions include Leu134 to Gly138, Asp167, Gly180, and Asn277. Asp305 contacts Fe cation.

This sequence belongs to the KAE1 / TsaD family. Requires Fe(2+) as cofactor.

It localises to the cytoplasm. It is found in the secreted. The catalysed reaction is L-threonylcarbamoyladenylate + adenosine(37) in tRNA = N(6)-L-threonylcarbamoyladenosine(37) in tRNA + AMP + H(+). Required for the formation of a threonylcarbamoyl group on adenosine at position 37 (t(6)A37) in tRNAs that read codons beginning with adenine. Is involved in the transfer of the threonylcarbamoyl moiety of threonylcarbamoyl-AMP (TC-AMP) to the N6 group of A37, together with TsaE and TsaB. TsaD likely plays a direct catalytic role in this reaction. The polypeptide is tRNA N6-adenosine threonylcarbamoyltransferase (Mannheimia haemolytica (Pasteurella haemolytica)).